The following is a 523-amino-acid chain: Maturase K (523 aa).

This sequence belongs to the intron maturase 2 family. MatK subfamily.

The protein resides in the plastid. The protein localises to the chloroplast. Functionally, usually encoded in the trnK tRNA gene intron. Probably assists in splicing its own and other chloroplast group II introns. This is Maturase K from Asphodeline lutea (King's spear).